A 117-amino-acid chain; its full sequence is Photosystem II reaction center Psb28 protein (117 aa).

Belongs to the Psb28 family. Part of the photosystem II complex.

It localises to the cellular thylakoid membrane. This Prochlorococcus marinus (strain MIT 9312) protein is Photosystem II reaction center Psb28 protein.